Reading from the N-terminus, the 142-residue chain is Protein NIM1-INTERACTING 1 (142 aa).

Residues 47-53 (DTFFKLI) are involved in NPR1/NIM1 interaction. Positions 60–64 (RKRRR) match the Nuclear localization signal motif. 2 disordered regions span residues 63-86 (RREE…RSGI) and 108-142 (MFVS…NLAL). Residues 110–141 (VSDHKEENTKVEQEEDQTEERNEDKALDLNLA) are a coiled coil. Residues 111–121 (SDHKEENTKVE) are compositionally biased toward basic and acidic residues.

Belongs to the NPR1-interactor family. Interacts with NPR1 C-terminal region.

The protein localises to the nucleus. This is Protein NIM1-INTERACTING 1 from Arabidopsis thaliana (Mouse-ear cress).